The sequence spans 511 residues: Apolipoprotein N-acyltransferase (511 aa).

6 consecutive transmembrane segments (helical) span residues 7–29, 58–78, 90–110, 125–145, 163–183, and 192–212; these read PGWP…LAPF, GWWY…VSIH, LLML…AWLW, LAFA…LTGF, VPVG…ALLV, and GASL…GLYL. The 241-residue stretch at 230–470 folds into the CN hydrolase domain; the sequence is IQGNIAQELK…QGILRGEVIP (241 aa). Residue E269 is the Proton acceptor of the active site. Residue K330 is part of the active site. Residue C382 is the Nucleophile of the active site. A helical membrane pass occupies residues 482–502; it reads VWPLAGLAGVLLLWALLGRQL.

Belongs to the CN hydrolase family. Apolipoprotein N-acyltransferase subfamily.

Its subcellular location is the cell inner membrane. The enzyme catalyses N-terminal S-1,2-diacyl-sn-glyceryl-L-cysteinyl-[lipoprotein] + a glycerophospholipid = N-acyl-S-1,2-diacyl-sn-glyceryl-L-cysteinyl-[lipoprotein] + a 2-acyl-sn-glycero-3-phospholipid + H(+). It functions in the pathway protein modification; lipoprotein biosynthesis (N-acyl transfer). Functionally, catalyzes the phospholipid dependent N-acylation of the N-terminal cysteine of apolipoprotein, the last step in lipoprotein maturation. This is Apolipoprotein N-acyltransferase from Pseudomonas aeruginosa (strain ATCC 15692 / DSM 22644 / CIP 104116 / JCM 14847 / LMG 12228 / 1C / PRS 101 / PAO1).